Consider the following 330-residue polypeptide: Short chain dehydrogenase yanD (330 aa).

NADP(+) contacts are provided by Lys-57, Asp-86, Asn-113, Tyr-204, and Lys-208. Catalysis depends on Tyr-204, which acts as the Proton donor. Lys-208 acts as the Lowers pKa of active site Tyr in catalysis.

The protein belongs to the short-chain dehydrogenases/reductases (SDR) family.

Its pathway is secondary metabolite biosynthesis; terpenoid biosynthesis. Its function is as follows. Short chain dehydrogenase; part of the gene cluster that mediates the biosynthesis of yanuthone D, a fungal isoprenoid epoxycyclohexenone that acts as an antibiotic against fungi and bacteria. The first step of the pathway is the synthesis of 6-methylsalicylic acid (6-MSA) by the polyketide synthase yanA. 6-MSA is then converted to m-cresol by the decarboxylase yanB. The cytochrome P450 monooxygenase yanC then catalyzes the oxidation of m-cresol to toluquinol. Epoxidation of toluquinol is then performed by the short chain dehydrogenase yanD, with the help of yanE, and a further prenylation by yanG leads to 7-deacetoxyyanuthone A. The next step is the hydroxylation of C-22 of 7-deacetoxyyanuthone A by the cytochrome P450 monooxygenase yanH to yield 22-deacetylyanuthone A. O-Mevalon transferase yanI then attaches mevalon to the hydroxyl group of 22-deacetylyanuthone A to produce yanuthone E. Finally, the FAD-dependent monooxygenase yanF oxidizes the hydroxyl group at C15 of yanuthone E to form yanuthone D. Furthermore, several branching points in the pathway lead to the production of yanuthones F and G from 7-deacetoxyyanuthone A; yanuthones H and I from 22-deacetylyanuthone A; and yanuthone J from yanuthone E. YanD is also involved in the synthesis of yanuthone X1 which does not have 6-methylsalicylic acid (6-MSA) as precursor. This Aspergillus niger (strain ATCC 1015 / CBS 113.46 / FGSC A1144 / LSHB Ac4 / NCTC 3858a / NRRL 328 / USDA 3528.7) protein is Short chain dehydrogenase yanD.